Here is a 150-residue protein sequence, read N- to C-terminus: Transcriptional repressor NrdR (150 aa).

Residues 3-34 (CPFCNASDTKVVDTRASEDDKIVRRRRECISC) fold into a zinc finger. Residues 49–139 (LTVVKKDKNR…VYREFTDVKS (91 aa)) form the ATP-cone domain.

This sequence belongs to the NrdR family. Requires Zn(2+) as cofactor.

Functionally, negatively regulates transcription of bacterial ribonucleotide reductase nrd genes and operons by binding to NrdR-boxes. The chain is Transcriptional repressor NrdR from Finegoldia magna (strain ATCC 29328 / DSM 20472 / WAL 2508) (Peptostreptococcus magnus).